A 636-amino-acid chain; its full sequence is MSDDTKSPHEETHGLNRRGFLGASALTGAAALVGASALGSAVVGREARAAGKGERSKAEVAPGELDEYYGFWSGGHSGEVRVLGVPSMRELMRIPVFNVDSATGWGLTNESKRVLGDSARFLNGDCHHPHISMTDGKYDGKYLFINDKANSRVARIRLDVMKCDRIVTIPNVQAIHGLRLQKVPHTRYVFCNAEFIIPHPNDGSTFDLSGDNAFTLYNAIDAETMEVAWQVIVDGNLDNTDMDYSGRFAASTCYNSEKAVDLGGMMRNERDWVVVFDIPRIEAEIKAKRFVTLGDSKVPVVDGRRKDGKDSPVTRYIPVPKNPHGLNTSPDGKYFIANGKLSPTCTMIAIERLGDLFAGKLADPRDVVVGEPELGLGPLHTTFDGRGNAYTTLFIDSQLVKWNLADAVRAYKGEKVDYIRQKLDVQYQPGHNHATLCETSEADGKWIVVLSKFSKDRFLPTGPLHPENDQLIDISGEEMKLVHDGPTFAEPHDCILARRDQIKTRKIWDRKDPFFAETVKRAEKDGIDLMKDNKVIREGNKVRVYMVSMAPSFGLTEFKVKQGDEVTVTITNLDEIEDVTHGFVMVNHGVCMEISPQQTSSITFVADKPGVHWYYCSWFCHALHMEMCGRMLVEKA.

The segment at residues M1–A49 is a signal peptide (tat-type signal). Residues H127, H128, and H176 each contribute to the Cu cation site. Ca(2+) contacts are provided by Y254, E257, M265, and D271. A compositionally biased stretch (basic and acidic residues) spans D302–P312. The tract at residues D302 to N322 is disordered. N322 is a Ca(2+) binding site. The Cu cation site is built by H324, H380, and H431. 2 residues coordinate Ca(2+): K452 and E467. 7 residues coordinate Cu cation: H492, H581, C616, W618, C620, H624, and M627. Residues N540–A636 are COX2-like.

The protein belongs to the NosZ family. It in the C-terminal section; belongs to the cytochrome c oxidase subunit 2 family. Homodimer. Ca(2+) serves as cofactor. It depends on Cu cation as a cofactor. Post-translationally, predicted to be exported by the Tat system. The position of the signal peptide cleavage has not been experimentally proven.

It is found in the periplasm. It catalyses the reaction N2 + 2 Fe(III)-[cytochrome c] + H2O = nitrous oxide + 2 Fe(II)-[cytochrome c] + 2 H(+). Its pathway is nitrogen metabolism; nitrate reduction (denitrification); dinitrogen from nitrate: step 4/4. Nitrous-oxide reductase is part of a bacterial respiratory system which is activated under anaerobic conditions in the presence of nitrate or nitrous oxide. In Pseudomonas aeruginosa (strain ATCC 15692 / DSM 22644 / CIP 104116 / JCM 14847 / LMG 12228 / 1C / PRS 101 / PAO1), this protein is Nitrous-oxide reductase (nosZ).